The sequence spans 337 residues: Probable sulfurtransferase (337 aa).

Position 83 (G83) interacts with ATP. 2 residues coordinate [4Fe-4S] cluster: C172 and C175. The ATP site is built by K179 and G206. C284 provides a ligand contact to [4Fe-4S] cluster.

The protein belongs to the TtcA family. [4Fe-4S] cluster serves as cofactor. Requires Mg(2+) as cofactor.

This Methanocaldococcus jannaschii (strain ATCC 43067 / DSM 2661 / JAL-1 / JCM 10045 / NBRC 100440) (Methanococcus jannaschii) protein is Probable sulfurtransferase.